A 215-amino-acid polypeptide reads, in one-letter code: Large ribosomal subunit protein bL25 (215 aa).

2 stretches are compositionally biased toward polar residues: residues 1–19 (MAKS…NTGK) and 206–215 (ENKTAATESE). 2 disordered regions span residues 1–29 (MAKS…RRDG) and 190–215 (AKYA…TESE).

The protein belongs to the bacterial ribosomal protein bL25 family. CTC subfamily. Part of the 50S ribosomal subunit; part of the 5S rRNA/L5/L18/L25 subcomplex. Contacts the 5S rRNA. Binds to the 5S rRNA independently of L5 and L18.

This is one of the proteins that binds to the 5S RNA in the ribosome where it forms part of the central protuberance. This chain is Large ribosomal subunit protein bL25, found in Mycobacterium leprae (strain TN).